We begin with the raw amino-acid sequence, 208 residues long: Large ribosomal subunit protein uL3 (208 aa).

Gln-149 is modified (N5-methylglutamine).

This sequence belongs to the universal ribosomal protein uL3 family. In terms of assembly, part of the 50S ribosomal subunit. Forms a cluster with proteins L14 and L19. In terms of processing, methylated by PrmB.

Its function is as follows. One of the primary rRNA binding proteins, it binds directly near the 3'-end of the 23S rRNA, where it nucleates assembly of the 50S subunit. This chain is Large ribosomal subunit protein uL3, found in Mannheimia succiniciproducens (strain KCTC 0769BP / MBEL55E).